We begin with the raw amino-acid sequence, 1046 residues long: FERM, ARHGEF and pleckstrin domain-containing protein 1 (1046 aa).

The region spanning 40–320 is the FERM domain; the sequence is ISIKIQMLDD…EHHAFFRLFE (281 aa). Positions 374–522 are disordered; the sequence is LTAQPSEQHA…LISPLLNDPS (149 aa). Residues 413-424 are compositionally biased toward basic and acidic residues; it reads KELKASTEDTGQ. Residues 458–513 are compositionally biased toward polar residues; that stretch reads RMQQNRPQSQQPSTAGSLTGSPHLSELSINSQGGPSVANMSLSPNLSPDAKQSSPL. A DH domain is found at 541-732; the sequence is KAYFIAKEVA…TEMMAQLHGN (192 aa). The 98-residue stretch at 761–858 folds into the PH 1 domain; the sequence is EFIRLGSLSK…WIEDIQMAID (98 aa). The interval 864 to 907 is disordered; that stretch reads SDPVPELLASSPPDNKSPDETTVDQESEDDLSASRTSLERQSPH. A compositionally biased stretch (acidic residues) spans 884-894; it reads TTVDQESEDDL. Residues 933-1030 form the PH 2 domain; the sequence is ENQLSGNLLR…WMEVIRSATS (98 aa).

In terms of assembly, interacts with PLXNA4. In terms of tissue distribution, detected in lateral motor column motor neurons and in preganglionic autonomic motor neurons of the column of Terni in the embryonic spinal cord (at protein level).

It localises to the cell membrane. Its subcellular location is the synapse. The protein resides in the synaptosome. The protein localises to the cytoplasm. It is found in the cytosol. It localises to the cell projection. Its subcellular location is the filopodium. The protein resides in the dendrite. The protein localises to the dendritic spine. Its function is as follows. Functions as a guanine nucleotide exchange factor for RAC1. Plays a role in semaphorin signaling via its interaction with PLXNA4. Plays a role in the assembly and disassembly of dendritic filopodia, the formation of dendritic spines, regulation of dendrite length and ultimately the formation of synapses. In Gallus gallus (Chicken), this protein is FERM, ARHGEF and pleckstrin domain-containing protein 1 (FARP1).